The sequence spans 312 residues: Olfactory receptor 6N1 (312 aa).

The Extracellular portion of the chain corresponds to 1 to 25; that stretch reads MDTGNWSQVAEFIILGFPHLQGVQI. The N-linked (GlcNAc...) asparagine glycan is linked to N5. A helical membrane pass occupies residues 26-46; that stretch reads YLFLLLLLIYLMTVLGNLLIF. The Cytoplasmic portion of the chain corresponds to 47–54; it reads LVVCLDSR. A helical membrane pass occupies residues 55–75; the sequence is LHTPMYHFVSILSFSELGYTA. Over 76-99 the chain is Extracellular; the sequence is ATIPKMLANLLSEKKTISFSGCLL. A disulfide bond links C97 and C189. Residues 100 to 120 traverse the membrane as a helical segment; the sequence is QIYFFHSLGATECYLLTAMAY. The Cytoplasmic portion of the chain corresponds to 121–139; that stretch reads DRYLAICRPLHYPTLMTPT. The chain crosses the membrane as a helical span at residues 140–160; sequence LCAEIAIGCWLGGLAGPVVEI. Topologically, residues 161-197 are extracellular; that stretch reads SLISRLPFCGPNRIQHVFCDFPPVLSLACTDTSINVL. Residues 198 to 217 traverse the membrane as a helical segment; the sequence is VDFVINSCKILATFLLILCS. Over 218 to 237 the chain is Cytoplasmic; it reads YVQIICTVLRIPSAAGKRKA. The chain crosses the membrane as a helical span at residues 238-258; that stretch reads ISTCASHFTVVLIFYGSILSM. The Extracellular segment spans residues 259-271; it reads YVQLKKSYSLDYD. The helical transmembrane segment at 272–292 threads the bilayer; the sequence is QALAVVYSVLTPFLNPFIYSL. Residues 293–312 are Cytoplasmic-facing; the sequence is RNKEIKEAVRRQLKRIGILA.

This sequence belongs to the G-protein coupled receptor 1 family.

It is found in the cell membrane. Its function is as follows. Odorant receptor. In Homo sapiens (Human), this protein is Olfactory receptor 6N1 (OR6N1).